A 218-amino-acid polypeptide reads, in one-letter code: PKHD-type hydroxylase IL0759 (218 aa).

A Fe2OG dioxygenase domain is found at 76-170 (QVARVTINRY…RLAMIGWVQS (95 aa)). Residues His94, Asp96, and His151 each contribute to the Fe cation site. Arg161 is a binding site for 2-oxoglutarate.

Fe(2+) is required as a cofactor. It depends on L-ascorbate as a cofactor.

The sequence is that of PKHD-type hydroxylase IL0759 from Idiomarina loihiensis (strain ATCC BAA-735 / DSM 15497 / L2-TR).